A 166-amino-acid chain; its full sequence is Myosin regulatory light chain 2, ventricular/cardiac muscle isoform (166 aa).

Serine 2 carries the post-translational modification N,N,N-trimethylserine. At asparagine 14 the chain carries Deamidated asparagine. Position 19 is a phosphoserine (serine 19). 3 consecutive EF-hand domains span residues 24–59 (TQIQ…LGRV), 94–129 (DPEE…QAER), and 130–165 (FSKE…GEEK). Ca(2+)-binding residues include aspartate 37, asparagine 39, aspartate 41, and aspartate 48. Residue threonine 52 is modified to Phosphothreonine.

As to quaternary structure, myosin is a hexamer of 2 heavy chains and 4 light chains. Interacts with MYOC. In terms of processing, N-terminus is methylated by METTL11A/NTM1. Phosphorylated by MYLK3 and MYLK2; promotes cardiac muscle contraction and function. Dephosphorylated by PPP1CB complexed to PPP1R12B. The phosphorylated form in adult is expressed as gradients across the heart from endocardium (low phosphorylation) to epicardium (high phosphorylation); regulates cardiac torsion and workload distribution.

It is found in the cytoplasm. It localises to the myofibril. Its subcellular location is the sarcomere. The protein localises to the a band. In terms of biological role, contractile protein that plays a role in heart development and function. Following phosphorylation, plays a role in cross-bridge cycling kinetics and cardiac muscle contraction by increasing myosin lever arm stiffness and promoting myosin head diffusion; as a consequence of the increase in maximum contraction force and calcium sensitivity of contraction force. These events altogether slow down myosin kinetics and prolong duty cycle resulting in accumulated myosins being cooperatively recruited to actin binding sites to sustain thin filament activation as a means to fine-tune myofilament calcium sensitivity to force. During cardiogenesis plays an early role in cardiac contractility by promoting cardiac myofibril assembly. The protein is Myosin regulatory light chain 2, ventricular/cardiac muscle isoform of Bos taurus (Bovine).